Consider the following 240-residue polypeptide: uncharacterized protein (240 aa).

This is an uncharacterized protein from Thermotoga maritima (strain ATCC 43589 / DSM 3109 / JCM 10099 / NBRC 100826 / MSB8).